We begin with the raw amino-acid sequence, 350 residues long: Peptide-N(4)-(N-acetyl-beta-glucosaminyl)asparagine amidase (350 aa).

Positions 123, 126, 157, and 160 each coordinate Zn(2+). Cys183 functions as the Nucleophile in the catalytic mechanism. Residues His210 and Asp227 contribute to the active site. Glu230 is a substrate binding site. A disordered region spans residues 324-350 (EIPPAAGAAGRQSGSADWKRQRGEDGR). Residues 340-350 (DWKRQRGEDGR) are compositionally biased toward basic and acidic residues.

This sequence belongs to the transglutaminase-like superfamily. PNGase family. Zn(2+) is required as a cofactor.

It localises to the cytoplasm. The catalysed reaction is Hydrolysis of an N(4)-(acetyl-beta-D-glucosaminyl)asparagine residue in which the glucosamine residue may be further glycosylated, to yield a (substituted) N-acetyl-beta-D-glucosaminylamine and a peptide containing an aspartate residue.. Its function is as follows. Specifically deglycosylates the denatured form of N-linked glycoproteins in the cytoplasm and assists their proteasome-mediated degradation. Cleaves the beta-aspartyl-glucosamine (GlcNAc) of the glycan and the amide side chain of Asn, converting Asn to Asp. Prefers proteins containing high-mannose over those bearing complex type oligosaccharides. Can recognize misfolded proteins in the endoplasmic reticulum that are exported to the cytosol to be destroyed and deglycosylate them, while it has no activity toward native proteins. Deglycosylation is a prerequisite for subsequent proteasome-mediated degradation of some, but not all, misfolded glycoproteins. This Eremothecium gossypii (strain ATCC 10895 / CBS 109.51 / FGSC 9923 / NRRL Y-1056) (Yeast) protein is Peptide-N(4)-(N-acetyl-beta-glucosaminyl)asparagine amidase (PNG1).